Here is a 520-residue protein sequence, read N- to C-terminus: AAA-ATPase At5g57480 (520 aa).

Positions 1–24 (MKEYWTSLASLLGVLAFCQSLMQS) are cleaved as a signal peptide. Residue 244 to 251 (GPPGTGKS) participates in ATP binding. Disordered stretches follow at residues 307 to 340 (KKNS…EEGG) and 467 to 520 (NVKD…TRED). Over residues 328 to 340 (SGSGSGGSGEEGG) the composition is skewed to gly residues. Acidic residues predominate over residues 497-512 (QNEDEDHDEEEIELED).

Belongs to the AAA ATPase family. BCS1 subfamily. Mg(2+) serves as cofactor.

It catalyses the reaction ATP + H2O = ADP + phosphate + H(+). This chain is AAA-ATPase At5g57480, found in Arabidopsis thaliana (Mouse-ear cress).